Reading from the N-terminus, the 312-residue chain is MTQPIVVAALYKFVTLSDYVELREPLLQAMVDNGIKGTLLIADEGINGTVSGSREGIDGLMAWLKSDPRLIDIDHKESYCDEQPFYRTKVKLKKEIVTLGVEGVDPNKSVGTYVEPKDWNDLISDPEVLLIDTRNDYEVSIGTFEGAIDPKTTSFREFPEYIKAHFDPAVHKKVAMFCTGGIRCEKASSYMLGEGFEEVYHLKGGILKYLEEVPEQESHWRGECFVFDNRVTVRHDLTEGDYDQCHACRTPISAEDRASEHYSPGVSCPHCWDSLSEKTRRSAIDRQKQIELAKARNQPHPIGRNYRLPSEA.

Positions serine 124–serine 218 constitute a Rhodanese domain. Cysteine 178 serves as the catalytic Cysteine persulfide intermediate. Residues alanine 293–alanine 312 form a disordered region.

Belongs to the TrhO family.

It catalyses the reaction uridine(34) in tRNA + AH2 + O2 = 5-hydroxyuridine(34) in tRNA + A + H2O. Functionally, catalyzes oxygen-dependent 5-hydroxyuridine (ho5U) modification at position 34 in tRNAs. This Pseudomonas syringae pv. syringae (strain B728a) protein is tRNA uridine(34) hydroxylase.